Here is a 2062-residue protein sequence, read N- to C-terminus: Ankyrin repeat domain-containing protein 12 (2062 aa).

2 disordered regions span residues M1–K119 and A145–P188. The span at P9–N20 shows a compositional bias: polar residues. 2 stretches are compositionally biased toward basic and acidic residues: residues P41–S57 and Y100–N117. Residues A145–S172 show a composition bias toward polar residues. At S149 the chain carries Phosphoserine. Residues R173 to T187 show a composition bias toward basic and acidic residues. 3 ANK repeats span residues R184 to V213, A217 to T246, and D250 to A280. 8 disordered regions span residues K301–D338, K409–T501, I538–Q577, Q609–K683, E727–L788, E812–D1073, K1097–V1227, and E1328–V1350. Acidic residues predominate over residues L306–E318. 2 stretches are compositionally biased toward polar residues: residues A319–D328 and K437–M454. The segment covering Q455–K467 has biased composition (basic and acidic residues). Basic residues predominate over residues Q468–N480. A compositionally biased stretch (basic and acidic residues) spans K481–T498. S543 bears the Phosphoserine mark. A compositionally biased stretch (polar residues) spans T565–S575. 8 stretches are compositionally biased toward basic and acidic residues: residues Q609 to P631, T639 to T649, K658 to K683, E727 to E784, E812 to S969, H977 to I1037, K1061 to N1072, and K1103 to K1157. Residue S630 is modified to Phosphoserine. At S861 the chain carries Phosphoserine. The segment covering S1161–S1189 has biased composition (polar residues). The segment covering S1200 to E1213 has biased composition (low complexity). The segment covering E1328–P1344 has biased composition (polar residues). The residue at position 1401 (S1401) is a Phosphoserine. Disordered regions lie at residues N1721 to A1744 and L1756 to P1795. Positions N1729–A1744 are enriched in polar residues.

As to quaternary structure, interacts with the PAS region of the p160 coactivators.

It is found in the nucleus. May recruit HDACs to the p160 coactivators/nuclear receptor complex to inhibit ligand-dependent transactivation. The chain is Ankyrin repeat domain-containing protein 12 (ANKRD12) from Homo sapiens (Human).